We begin with the raw amino-acid sequence, 262 residues long: Cytochrome b mRNA maturase bI2 (262 aa).

Belongs to the LAGLIDADG endonuclease family.

The protein resides in the mitochondrion. This protein is responsible for splicing and maturation of cytochrome b mRNA. Specifically, it may be responsible for the splicing specificity of the second intron. The sequence is that of Cytochrome b mRNA maturase bI2 (bI2) from Debaryomyces hansenii (strain ATCC 36239 / CBS 767 / BCRC 21394 / JCM 1990 / NBRC 0083 / IGC 2968) (Yeast).